The following is a 640-amino-acid chain: Biosynthetic arginine decarboxylase (640 aa).

Lys105 is subject to N6-(pyridoxal phosphate)lysine. A substrate-binding site is contributed by 290 to 300 (FDVGGGLAIDY).

It belongs to the Orn/Lys/Arg decarboxylase class-II family. SpeA subfamily. Mg(2+) serves as cofactor. It depends on pyridoxal 5'-phosphate as a cofactor.

The catalysed reaction is L-arginine + H(+) = agmatine + CO2. In terms of biological role, catalyzes the biosynthesis of agmatine from arginine. In Vibrio vulnificus (strain CMCP6), this protein is Biosynthetic arginine decarboxylase.